The primary structure comprises 310 residues: Membrane protein insertase YidC 2 (310 aa).

An N-terminal signal peptide occupies residues 1–23 (MKKIYKRLLFSGLALSMLFFLSG). Cys24 is lipidated: N-palmitoyl cysteine. A lipid anchor (S-diacylglycerol cysteine) is attached at Cys24. 5 helical membrane-spanning segments follow: residues 34–54 (GEGW…QYLA), 57–77 (LGLG…LLIL), 136–156 (FGGL…ALYI), 180–200 (IITV…TLSV), and 220–240 (VMIS…SGIF). A disordered region spans residues 263–310 (EFKKNPPKPFKSNARKDITPQANNDKKLITSKKQKSNRNAGKQRHHKQ). Residues 276 to 290 (ARKDITPQANNDKKL) are compositionally biased toward basic and acidic residues. Basic residues predominate over residues 291–310 (ITSKKQKSNRNAGKQRHHKQ).

It belongs to the OXA1/ALB3/YidC family. Type 2 subfamily.

The protein resides in the cell membrane. Functionally, required for the insertion and/or proper folding and/or complex formation of integral membrane proteins into the membrane. Involved in integration of membrane proteins that insert both dependently and independently of the Sec translocase complex, as well as at least some lipoproteins. Partially complements an E.coli yidC depletion experiment. The polypeptide is Membrane protein insertase YidC 2 (yidC2) (Streptococcus mutans serotype c (strain ATCC 700610 / UA159)).